The chain runs to 124 residues: Cytochrome c oxidase subunit 4 isoform 1, mitochondrial (124 aa).

Lys4 is subject to N6-acetyllysine; alternate. N6-succinyllysine; alternate is present on Lys4. 2 positions are modified to phosphoserine: Ser31 and Ser33. Lys35 is modified (N6-acetyllysine; alternate). Residue Lys35 is modified to N6-succinyllysine; alternate. Lys42 carries the post-translational modification N6-acetyllysine.

Belongs to the cytochrome c oxidase IV family. As to quaternary structure, component of the cytochrome c oxidase (complex IV, CIV), a multisubunit enzyme composed of 14 subunits. The complex is composed of a catalytic core of 3 subunits MT-CO1, MT-CO2 and MT-CO3, encoded in the mitochondrial DNA, and 11 supernumerary subunits COX4I, COX5A, COX5B, COX6A, COX6B, COX6C, COX7A, COX7B, COX7C, COX8 and NDUFA4, which are encoded in the nuclear genome. The complex exists as a monomer or a dimer and forms supercomplexes (SCs) in the inner mitochondrial membrane with NADH-ubiquinone oxidoreductase (complex I, CI) and ubiquinol-cytochrome c oxidoreductase (cytochrome b-c1 complex, complex III, CIII), resulting in different assemblies (supercomplex SCI(1)III(2)IV(1) and megacomplex MCI(2)III(2)IV(2)). Interacts with PHB2; the interaction decreases in absence of SPHK2. Interacts with AFG1L. Interacts with ABCB7; this interaction allows the regulation of cellular iron homeostasis and cellular reactive oxygen species (ROS) levels in cardiomyocytes. Interacts with FLVCR2; this interaction occurs in the absence of heme and is disrupted upon heme binding. Interacts with IRGC.

It is found in the mitochondrion inner membrane. It functions in the pathway energy metabolism; oxidative phosphorylation. In terms of biological role, component of the cytochrome c oxidase, the last enzyme in the mitochondrial electron transport chain which drives oxidative phosphorylation. The respiratory chain contains 3 multisubunit complexes succinate dehydrogenase (complex II, CII), ubiquinol-cytochrome c oxidoreductase (cytochrome b-c1 complex, complex III, CIII) and cytochrome c oxidase (complex IV, CIV), that cooperate to transfer electrons derived from NADH and succinate to molecular oxygen, creating an electrochemical gradient over the inner membrane that drives transmembrane transport and the ATP synthase. Cytochrome c oxidase is the component of the respiratory chain that catalyzes the reduction of oxygen to water. Electrons originating from reduced cytochrome c in the intermembrane space (IMS) are transferred via the dinuclear copper A center (CU(A)) of subunit 2 and heme A of subunit 1 to the active site in subunit 1, a binuclear center (BNC) formed by heme A3 and copper B (CU(B)). The BNC reduces molecular oxygen to 2 water molecules using 4 electrons from cytochrome c in the IMS and 4 protons from the mitochondrial matrix. The chain is Cytochrome c oxidase subunit 4 isoform 1, mitochondrial (COX4I1) from Saimiri sciureus (Common squirrel monkey).